We begin with the raw amino-acid sequence, 190 residues long: Potassium-transporting ATPase KdpC subunit (190 aa).

A helical membrane pass occupies residues 11–31 (LIVLMSLITGVAYPLVVTGVA).

This sequence belongs to the KdpC family. The system is composed of three essential subunits: KdpA, KdpB and KdpC.

The protein resides in the cell inner membrane. Part of the high-affinity ATP-driven potassium transport (or Kdp) system, which catalyzes the hydrolysis of ATP coupled with the electrogenic transport of potassium into the cytoplasm. This subunit acts as a catalytic chaperone that increases the ATP-binding affinity of the ATP-hydrolyzing subunit KdpB by the formation of a transient KdpB/KdpC/ATP ternary complex. The protein is Potassium-transporting ATPase KdpC subunit of Pseudomonas syringae pv. tomato (strain ATCC BAA-871 / DC3000).